The following is a 154-amino-acid chain: 17.0 kDa class II heat shock protein (154 aa).

The sHSP domain occupies 39–154 (DARAMAATPA…KPKTIEIKVA (116 aa)).

It belongs to the small heat shock protein (HSP20) family.

The protein localises to the cytoplasm. The sequence is that of 17.0 kDa class II heat shock protein (HSP18) from Zea mays (Maize).